Here is a 778-residue protein sequence, read N- to C-terminus: ATP synthase subunit beta (778 aa).

The unknown stretch occupies residues 1–289; the sequence is MKENNKTIEA…IDIYEENEDL (289 aa). An ATP synthase subunit beta region spans residues 290–778; sequence MKLNTLKSDK…KPLNSENKSN (489 aa). ATP is bound at residue 447–454; that stretch reads GGAGVGKT.

Belongs to the ATPase alpha/beta chains family. As to quaternary structure, F-type ATPases have 2 components, CF(1) - the catalytic core - and CF(0) - the membrane proton channel. CF(1) has five subunits: alpha(3), beta(3), gamma(1), delta(1), epsilon(1). CF(0) has three main subunits: a(1), b(2) and c(9-12). The alpha and beta chains form an alternating ring which encloses part of the gamma chain. CF(1) is attached to CF(0) by a central stalk formed by the gamma and epsilon chains, while a peripheral stalk is formed by the delta and b chains.

The protein resides in the cell membrane. It catalyses the reaction ATP + H2O + 4 H(+)(in) = ADP + phosphate + 5 H(+)(out). Produces ATP from ADP in the presence of a proton gradient across the membrane. The catalytic sites are hosted primarily by the beta subunits. This chain is ATP synthase subunit beta (atpD), found in Malacoplasma penetrans (strain HF-2) (Mycoplasma penetrans).